Here is a 224-residue protein sequence, read N- to C-terminus: UPF0758 protein HEAR2468 (224 aa).

An MPN domain is found at 102 to 224; the sequence is ALNSPQAVKQ…VYSFAEQGQL (123 aa). Residues H173, H175, and D186 each coordinate Zn(2+). The JAMM motif motif lies at 173 to 186; sequence HNHPSGTPEPSAAD.

Belongs to the UPF0758 family.

The protein is UPF0758 protein HEAR2468 of Herminiimonas arsenicoxydans.